A 394-amino-acid chain; its full sequence is Elongation factor Tu 2 (394 aa).

The tr-type G domain maps to 10 to 204; sequence KPHVNVGTIG…HLDTYIPEPE (195 aa). A G1 region spans residues 19–26; that stretch reads GHVDHGKT. 19–26 is a GTP binding site; the sequence is GHVDHGKT. Thr26 serves as a coordination point for Mg(2+). The G2 stretch occupies residues 60-64; that stretch reads GITIN. Residues 81-84 form a G3 region; the sequence is DCPG. GTP contacts are provided by residues 81 to 85 and 136 to 139; these read DCPGH and NKCD. A G4 region spans residues 136-139; sequence NKCD. The interval 174-176 is G5; the sequence is SAL.

This sequence belongs to the TRAFAC class translation factor GTPase superfamily. Classic translation factor GTPase family. EF-Tu/EF-1A subfamily. In terms of assembly, monomer.

It localises to the cytoplasm. The enzyme catalyses GTP + H2O = GDP + phosphate + H(+). Functionally, GTP hydrolase that promotes the GTP-dependent binding of aminoacyl-tRNA to the A-site of ribosomes during protein biosynthesis. This is Elongation factor Tu 2 from Haemophilus influenzae (strain 86-028NP).